A 455-amino-acid chain; its full sequence is DNA N(6)-methyladenine demethylase ALKBH1C (455 aa).

Disordered stretches follow at residues 1–114 (MNHS…AGDN) and 173–194 (SSVE…SNES). A Fe2OG dioxygenase domain is found at 345-455 (LPDICIVNFY…GRLNLTFRQY (111 aa)). Residue 352-354 (NFY) participates in 2-oxoglutarate binding. Fe cation contacts are provided by His-363, Asp-365, and His-423. 447 to 453 (RLNLTFR) contacts 2-oxoglutarate.

It belongs to the alkB family. Fe(2+) is required as a cofactor. In terms of tissue distribution, expressed at low levels in roots and seedlings, but barely in cauline leaves, rosette leaves, stems, siliques and flowers.

It localises to the nucleus. The protein localises to the cytoplasm. The catalysed reaction is an N(6)-methyl-2'-deoxyadenosine in DNA + 2-oxoglutarate + O2 = a 2'-deoxyadenosine in DNA + formaldehyde + succinate + CO2. Functionally, dioxygenase that catalyzes DNA N(6)-methyladenine (6 mA) demethylation with a low efficiency. This Arabidopsis thaliana (Mouse-ear cress) protein is DNA N(6)-methyladenine demethylase ALKBH1C.